The following is a 327-amino-acid chain: 2-methoxy-6-polyprenyl-1,4-benzoquinol methylase, mitochondrial (327 aa).

A mitochondrion-targeting transit peptide spans 1-49 (MAAPRSCALWSYCGRGWSWAMRGCQLLGLRSSWPGAPLSARLLPQEKRA). S-adenosyl-L-methionine is bound by residues Thr117, Asp171, and 199–200 (DA).

This sequence belongs to the class I-like SAM-binding methyltransferase superfamily. MenG/UbiE family. In terms of assembly, component of a multi-subunit COQ enzyme complex, composed of at least COQ3, COQ4, COQ5, COQ6, COQ7 and COQ9. Interacts with PYURF; the interaction is direct, stabilizes COQ5 protein and associates PYURF with COQ enzyme complex.

It is found in the mitochondrion inner membrane. It carries out the reaction 2-methoxy-6-(all-trans-decaprenyl)benzene-1,4-diol + S-adenosyl-L-methionine = 5-methoxy-2-methyl-3-(all-trans-decaprenyl)benzene-1,4-diol + S-adenosyl-L-homocysteine + H(+). It functions in the pathway cofactor biosynthesis; ubiquinone biosynthesis. Its function is as follows. Methyltransferase required for the conversion of 2-decaprenyl-6-methoxy-1,4-benzoquinol (DDMQH2) to 2-decaprenyl-3-methyl-6-methoxy-1,4-benzoquinol (DMQH2). The chain is 2-methoxy-6-polyprenyl-1,4-benzoquinol methylase, mitochondrial from Pongo abelii (Sumatran orangutan).